The following is a 77-amino-acid chain: Large ribosomal subunit protein bL28 (77 aa).

Residues 1 to 25 form a disordered region; that stretch reads MARVCQVTGKAPMSGNNVSHANNKT.

The protein belongs to the bacterial ribosomal protein bL28 family.

The chain is Large ribosomal subunit protein bL28 from Paraburkholderia phytofirmans (strain DSM 17436 / LMG 22146 / PsJN) (Burkholderia phytofirmans).